The primary structure comprises 87 residues: Beta-toxin Ct17 (87 aa).

A signal peptide spans 1–19 (MNSLLMITACLVLIGTVWA). Residues 20-85 (KKDGYLVDKT…TWPLPNKRCG (66 aa)) enclose the LCN-type CS-alpha/beta domain. Intrachain disulfides connect cysteine 31-cysteine 84, cysteine 35-cysteine 60, cysteine 44-cysteine 65, and cysteine 48-cysteine 67. Residue cysteine 84 is modified to Cysteine amide.

This sequence belongs to the long (4 C-C) scorpion toxin superfamily. Sodium channel inhibitor family. Beta subfamily. As to expression, expressed by the venom gland.

It localises to the secreted. In terms of biological role, beta toxins bind voltage-independently at site-4 of sodium channels (Nav) and shift the voltage of activation toward more negative potentials thereby affecting sodium channel activation and promoting spontaneous and repetitive firing. Is possibly lethal to mice, freshwater shrimp and crickets. The protein is Beta-toxin Ct17 of Centruroides tecomanus (Scorpion).